Here is a 62-residue protein sequence, read N- to C-terminus: Photosystem II reaction center protein Z (62 aa).

The next 2 helical transmembrane spans lie at 8–28 (AVFALIATSLILLISVPVVFA) and 41–61 (FSGTSLWIGLVFLVGILNSLI).

It belongs to the PsbZ family. In terms of assembly, PSII is composed of 1 copy each of membrane proteins PsbA, PsbB, PsbC, PsbD, PsbE, PsbF, PsbH, PsbI, PsbJ, PsbK, PsbL, PsbM, PsbT, PsbY, PsbZ, Psb30/Ycf12, at least 3 peripheral proteins of the oxygen-evolving complex and a large number of cofactors. It forms dimeric complexes.

The protein localises to the plastid. It is found in the chloroplast thylakoid membrane. May control the interaction of photosystem II (PSII) cores with the light-harvesting antenna, regulates electron flow through the 2 photosystem reaction centers. PSII is a light-driven water plastoquinone oxidoreductase, using light energy to abstract electrons from H(2)O, generating a proton gradient subsequently used for ATP formation. In Nicotiana sylvestris (Wood tobacco), this protein is Photosystem II reaction center protein Z.